The sequence spans 355 residues: DNA polymerase IV (355 aa).

One can recognise a UmuC domain in the interval 6–187 (IIHVDMDAFY…LPVGKIHGVG (182 aa)). Residues D10 and D105 each contribute to the Mg(2+) site. E106 is a catalytic residue.

The protein belongs to the DNA polymerase type-Y family. As to quaternary structure, monomer. Mg(2+) serves as cofactor.

The protein localises to the cytoplasm. It carries out the reaction DNA(n) + a 2'-deoxyribonucleoside 5'-triphosphate = DNA(n+1) + diphosphate. Poorly processive, error-prone DNA polymerase involved in untargeted mutagenesis. Copies undamaged DNA at stalled replication forks, which arise in vivo from mismatched or misaligned primer ends. These misaligned primers can be extended by PolIV. Exhibits no 3'-5' exonuclease (proofreading) activity. May be involved in translesional synthesis, in conjunction with the beta clamp from PolIII. This chain is DNA polymerase IV, found in Alkalilimnicola ehrlichii (strain ATCC BAA-1101 / DSM 17681 / MLHE-1).